The sequence spans 147 residues: Mannitol-specific cryptic phosphotransferase enzyme IIA component (147 aa).

Positions 5–147 constitute a PTS EIIA type-2 domain; sequence DYFPESSISV…KQLADIISRG (143 aa). H67 acts as the Tele-phosphohistidine intermediate in catalysis. H67 carries the post-translational modification Phosphohistidine; by HPr.

It is found in the cytoplasm. In terms of biological role, the phosphoenolpyruvate-dependent sugar phosphotransferase system (sugar PTS), a major carbohydrate active transport system, catalyzes the phosphorylation of incoming sugar substrates concomitantly with their translocation across the cell membrane. The enzyme II CmtAB PTS system is involved in D-mannitol transport. The sequence is that of Mannitol-specific cryptic phosphotransferase enzyme IIA component (cmtB) from Escherichia coli O157:H7.